The chain runs to 199 residues: MIGRISGLLLEKNPPQILVDAHGVGYELEVPMSTFYGLPATGTQVSLHTHLAIREDGHFLYGFATDEERTAFRQLLKVSGIGARTALAVLSGLSVSDLAQAVALQEAGRLVKIPGIGKKTAERLLLELRDKLGKALPQVAGARLAAVAGGAPDAKSDILNALLALGYNEKEALGAMKGLAEDTGVSDGIRQALKLLSKA.

Positions 1 to 64 (MIGRISGLLL…EDGHFLYGFA (64 aa)) are domain I. The tract at residues 65–143 (TDEERTAFRQ…KALPQVAGAR (79 aa)) is domain II. The interval 144 to 154 (LAAVAGGAPDA) is flexible linker. The tract at residues 154 to 199 (AKSDILNALLALGYNEKEALGAMKGLAEDTGVSDGIRQALKLLSKA) is domain III.

The protein belongs to the RuvA family. Homotetramer. Forms an RuvA(8)-RuvB(12)-Holliday junction (HJ) complex. HJ DNA is sandwiched between 2 RuvA tetramers; dsDNA enters through RuvA and exits via RuvB. An RuvB hexamer assembles on each DNA strand where it exits the tetramer. Each RuvB hexamer is contacted by two RuvA subunits (via domain III) on 2 adjacent RuvB subunits; this complex drives branch migration. In the full resolvosome a probable DNA-RuvA(4)-RuvB(12)-RuvC(2) complex forms which resolves the HJ.

The protein localises to the cytoplasm. In terms of biological role, the RuvA-RuvB-RuvC complex processes Holliday junction (HJ) DNA during genetic recombination and DNA repair, while the RuvA-RuvB complex plays an important role in the rescue of blocked DNA replication forks via replication fork reversal (RFR). RuvA specifically binds to HJ cruciform DNA, conferring on it an open structure. The RuvB hexamer acts as an ATP-dependent pump, pulling dsDNA into and through the RuvAB complex. HJ branch migration allows RuvC to scan DNA until it finds its consensus sequence, where it cleaves and resolves the cruciform DNA. This chain is Holliday junction branch migration complex subunit RuvA, found in Azoarcus sp. (strain BH72).